Consider the following 582-residue polypeptide: Formate--tetrahydrofolate ligase (582 aa).

65-72 (TPLGEGKT) lines the ATP pocket.

Belongs to the formate--tetrahydrofolate ligase family.

The enzyme catalyses (6S)-5,6,7,8-tetrahydrofolate + formate + ATP = (6R)-10-formyltetrahydrofolate + ADP + phosphate. It participates in one-carbon metabolism; tetrahydrofolate interconversion. This is Formate--tetrahydrofolate ligase from Vibrio cholerae serotype O1 (strain ATCC 39315 / El Tor Inaba N16961).